The following is a 22-amino-acid chain: Brevinin-1OKc (22 aa).

Position 22 is a lysine amide (lysine 22).

As to expression, expressed by the skin glands.

It is found in the secreted. In terms of biological role, antimicrobial peptide. Active against Gram-negative bacterium E.coli (MIC=6 uM) and against Gram-positive bacterium S.aureus (MIC=12.5 uM). The polypeptide is Brevinin-1OKc (Nidirana okinavana (Kampira Falls frog)).